Here is a 321-residue protein sequence, read N- to C-terminus: Homoserine O-acetyltransferase (321 aa).

Residue Cys-142 is the Acyl-thioester intermediate of the active site. Substrate contacts are provided by Lys-163 and Ser-192. The active-site Proton acceptor is His-235. Glu-237 is a catalytic residue. Arg-249 lines the substrate pocket.

This sequence belongs to the MetA family.

The protein resides in the cytoplasm. It catalyses the reaction L-homoserine + acetyl-CoA = O-acetyl-L-homoserine + CoA. The protein operates within amino-acid biosynthesis; L-methionine biosynthesis via de novo pathway; O-acetyl-L-homoserine from L-homoserine: step 1/1. In terms of biological role, transfers an acetyl group from acetyl-CoA to L-homoserine, forming acetyl-L-homoserine. The sequence is that of Homoserine O-acetyltransferase from Lactococcus lactis subsp. lactis (strain IL1403) (Streptococcus lactis).